We begin with the raw amino-acid sequence, 418 residues long: UDP-N-acetylglucosamine 1-carboxyvinyltransferase (418 aa).

Residue 22–23 coordinates phosphoenolpyruvate; sequence KN. A UDP-N-acetyl-alpha-D-glucosamine-binding site is contributed by Arg92. The Proton donor role is filled by Cys116. Cys116 bears the 2-(S-cysteinyl)pyruvic acid O-phosphothioketal mark. UDP-N-acetyl-alpha-D-glucosamine is bound by residues 121 to 125, Asp305, and Ile327; that span reads RPVDL.

It belongs to the EPSP synthase family. MurA subfamily.

It localises to the cytoplasm. It catalyses the reaction phosphoenolpyruvate + UDP-N-acetyl-alpha-D-glucosamine = UDP-N-acetyl-3-O-(1-carboxyvinyl)-alpha-D-glucosamine + phosphate. It participates in cell wall biogenesis; peptidoglycan biosynthesis. Its function is as follows. Cell wall formation. Adds enolpyruvyl to UDP-N-acetylglucosamine. This is UDP-N-acetylglucosamine 1-carboxyvinyltransferase from Acidiphilium cryptum (strain JF-5).